The sequence spans 405 residues: uncharacterized protein (405 aa).

The protein belongs to the UDP-glycosyltransferase family.

This is an uncharacterized protein from Bacillus subtilis (strain 168).